The following is a 91-amino-acid chain: Small ribosomal subunit protein uS17 (91 aa).

This sequence belongs to the universal ribosomal protein uS17 family. Part of the 30S ribosomal subunit.

In terms of biological role, one of the primary rRNA binding proteins, it binds specifically to the 5'-end of 16S ribosomal RNA. The polypeptide is Small ribosomal subunit protein uS17 (Malacoplasma penetrans (strain HF-2) (Mycoplasma penetrans)).